The following is a 498-amino-acid chain: Polygalacturonan/rhamnogalacturonan-binding protein YtcQ (498 aa).

The first 22 residues, M1–G22, serve as a signal peptide directing secretion. C23 carries the N-palmitoyl cysteine lipid modification. The S-diacylglycerol cysteine moiety is linked to residue C23.

The protein belongs to the bacterial solute-binding protein 1 family. As to quaternary structure, the complex is probably composed of two ATP-binding proteins (MsmX), two transmembrane proteins (YtcP and YteP) and a solute-binding protein (YtcQ).

The protein resides in the cell membrane. Involved in pectin degradation. Part of the ABC transporter complex YtcQP-YteP involved in the uptake of polygalacturonan and rhamnogalacturonan type I. This chain is Polygalacturonan/rhamnogalacturonan-binding protein YtcQ (ytcQ), found in Bacillus subtilis (strain 168).